The primary structure comprises 778 residues: MKPDAAREPEPLSPGRGAEAEGRWRERGEADTERQRTRERQEATLAGLAELGYLRQRQELLVRGALRCSGTVGTVAPRSGELRGDAAQRSRLEEKFLEENILLLRRQLNCLRRRDAGLLNQLQELDKQISDLRLDVEKTSEEHLETDSRPSSGFYELSDGASGSLSNSSNSVFSECLSSCHSSTCFCSPLEAALTISDGCPKSADVNPKYQCDLVSKNGNDVYRYPSPLHAVAVQSPMFLLCLTGNTLREEEGLGSHASDICIGSELNATKTDNSLPSPSSLWSASHPASSKKMDGYILSLVQKKTHPVRTNKPRTSVNADPTKGLLRNGSVCVRAPSGVPPGSSVNFKNTKQMCLPAGGITSLENGPFSPPKQRSKDSKTDQLESKRLALPESCSAGAAMEPQSKHVPKAAKAASQELTRCQAGLGESMKESNQASAVSPKTSPGRGPVAPAESKALQLPKKMSQKNSLQAVPALDRPALDFKSEGSSQSLEEGHLVKAQFIPGQQAAARPHRAHRNPGVARSATLKARGQAAMEHGLPTVREKPRAAGKKCRFPDDSDTNKKFRKTSAKGRRSGGLQDAGLPGRALGTGGHRAGSRAHAHGREPVVAKPKHKRTDYRRWKSSAEVSYEEALRRARRARREHGAAYRVAVALPYASPYAYVPSDSEYSAECESLFHSTVVDTSEDEQSNYTTNCFGDSESSVSEGDFVGESTTTSDSEESGGLIWSQFVQTLPIQTVTAPDLHTRPTKTFVKIKASHNLKKKILRFRSGSLKLMTTV.

2 stretches are compositionally biased toward basic and acidic residues: residues 1–10 and 18–40; these read MKPDAAREPE and AEAEGRWRERGEADTERQRTRER. Residues 1–40 are disordered; it reads MKPDAAREPEPLSPGRGAEAEGRWRERGEADTERQRTRER. Residues 85 to 149 are required for self-association; that stretch reads DAAQRSRLEE…SEEHLETDSR (65 aa). The stretch at 85-149 forms a coiled coil; the sequence is DAAQRSRLEE…SEEHLETDSR (65 aa). Residues 125-134 carry the Nuclear export signal motif; that stretch reads LDKQISDLRL. Disordered regions lie at residues 305–324, 359–386, 397–416, 428–468, 544–616, and 694–721; these read KTHPVRTNKPRTSVNADPTK, GGITSLENGPFSPPKQRSKDSKTDQLES, AGAAMEPQSKHVPKAAKAAS, ESMK…SQKN, EKPR…HKRT, and NCFGDSESSVSEGDFVGESTTTSDSEES. Residues 375–386 show a composition bias toward basic and acidic residues; it reads RSKDSKTDQLES. Residues 432-443 are compositionally biased toward polar residues; sequence ESNQASAVSPKT. The short motif at 551–564 is the Bipartite nuclear localization signal element; sequence KKCRFPDDSDTNKK. Over residues 554–563 the composition is skewed to basic and acidic residues; it reads RFPDDSDTNK. The span at 564–574 shows a compositional bias: basic residues; it reads KFRKTSAKGRR. Polar residues predominate over residues 694 to 704; that stretch reads NCFGDSESSVS. The short motif at 768 to 778 is the PDZ-binding element; that stretch reads RSGSLKLMTTV. S769 carries the phosphoserine; by PKA modification.

Belongs to the dapper family. As to quaternary structure, can form homodimers and heterodimers with DACT2 or DACT3. Interacts with CSNK1D, PKA catalytic subunit, PKC-type kinase, CSNK2A1, CSNK2B, DVL1, DLV2, DVAL3, VANGL1, VANGL2, CTNND1 and HDAC1. Interacts with GSK3B; the interaction is indicative for an association of DACT1 with the beta-catenin destruction complex. Interacts with GSK3A. Interacts with YWHAB; the interaction is enhanced by PKA phosphorylating DACT1 at Ser-769. Interacts with CTNNB1. Expressed in multiple tissues including brain, heart, kidney, liver and testis.

It is found in the cytoplasm. The protein localises to the nucleus. The protein resides in the synapse. In terms of biological role, involved in regulation of intracellular signaling pathways during development. Specifically thought to play a role in canonical and/or non-canonical Wnt signaling pathways through interaction with DSH (Dishevelled) family proteins. The activation/inhibition of Wnt signaling may depend on the phosphorylation status. Proposed to regulate the degradation of CTNNB1/beta-catenin, thereby modulating the transcriptional activation of target genes of the Wnt signaling pathway. Its function in stabilizing CTNNB1 may involve inhibition of GSK3B activity. Promotes the membrane localization of CTNNB1. The cytoplasmic form can induce DVL2 degradation via a lysosome-dependent mechanism; the function is inhibited by PKA-induced binding to 14-3-3 proteins, such as YWHAB. Seems to be involved in morphogenesis at the primitive streak by regulating VANGL2 and DVL2; the function seems to be independent of canonical Wnt signaling and rather involves the non-canonical Wnt/planar cell polarity (PCP) pathway. The nuclear form may prevent the formation of LEF1:CTNNB1 complex and recruit HDAC1 to LEF1 at target gene promoters to repress transcription thus antagonizing Wnt signaling. May be involved in positive regulation of fat cell differentiation. During neuronal differentiation may be involved in excitatory synapse organization, and dendrite formation and establishment of spines. The protein is Dapper homolog 1 (Dact1) of Mus musculus (Mouse).